We begin with the raw amino-acid sequence, 372 residues long: Glutamate 5-kinase (372 aa).

ATP is bound at residue Lys-6. Substrate-binding residues include Ser-46, Asp-133, and Asn-145. Residues 165–166 (TD) and 207–213 (TGGMYTK) each bind ATP. One can recognise a PUA domain in the interval 272–350 (NGFLFVDEGA…HDIESILGYK (79 aa)).

Belongs to the glutamate 5-kinase family.

Its subcellular location is the cytoplasm. The catalysed reaction is L-glutamate + ATP = L-glutamyl 5-phosphate + ADP. Its pathway is amino-acid biosynthesis; L-proline biosynthesis; L-glutamate 5-semialdehyde from L-glutamate: step 1/2. Catalyzes the transfer of a phosphate group to glutamate to form L-glutamate 5-phosphate. This is Glutamate 5-kinase from Caldanaerobacter subterraneus subsp. tengcongensis (strain DSM 15242 / JCM 11007 / NBRC 100824 / MB4) (Thermoanaerobacter tengcongensis).